The chain runs to 303 residues: Haloalkane dehalogenase (303 aa).

The AB hydrolase-1 domain occupies 48 to 192; the sequence is PVLLLHGEPS…GTVTKLSQAV (145 aa). The active-site Nucleophile is the aspartate 123. Aspartate 250 functions as the Proton donor in the catalytic mechanism. The active-site Proton acceptor is the histidine 280.

This sequence belongs to the haloalkane dehalogenase family. Type 1 subfamily. Monomer.

It carries out the reaction 1-haloalkane + H2O = a halide anion + a primary alcohol + H(+). Its function is as follows. Catalyzes hydrolytic cleavage of carbon-halogen bonds in halogenated aliphatic compounds, leading to the formation of the corresponding primary alcohols, halide ions and protons. In Psychrobacter cryohalolentis (strain ATCC BAA-1226 / DSM 17306 / VKM B-2378 / K5), this protein is Haloalkane dehalogenase.